The chain runs to 356 residues: Phosphoserine aminotransferase (356 aa).

An L-glutamate-binding site is contributed by R41. Pyridoxal 5'-phosphate-binding positions include 75 to 76 (AS), W99, T147, D166, and Q189. K190 carries the N6-(pyridoxal phosphate)lysine modification. 231-232 (NT) contributes to the pyridoxal 5'-phosphate binding site.

It belongs to the class-V pyridoxal-phosphate-dependent aminotransferase family. SerC subfamily. Homodimer. Requires pyridoxal 5'-phosphate as cofactor.

Its subcellular location is the cytoplasm. The enzyme catalyses O-phospho-L-serine + 2-oxoglutarate = 3-phosphooxypyruvate + L-glutamate. It catalyses the reaction 4-(phosphooxy)-L-threonine + 2-oxoglutarate = (R)-3-hydroxy-2-oxo-4-phosphooxybutanoate + L-glutamate. Its pathway is amino-acid biosynthesis; L-serine biosynthesis; L-serine from 3-phospho-D-glycerate: step 2/3. It functions in the pathway cofactor biosynthesis; pyridoxine 5'-phosphate biosynthesis; pyridoxine 5'-phosphate from D-erythrose 4-phosphate: step 3/5. Catalyzes the reversible conversion of 3-phosphohydroxypyruvate to phosphoserine and of 3-hydroxy-2-oxo-4-phosphonooxybutanoate to phosphohydroxythreonine. This is Phosphoserine aminotransferase from Phocaeicola vulgatus (strain ATCC 8482 / DSM 1447 / JCM 5826 / CCUG 4940 / NBRC 14291 / NCTC 11154) (Bacteroides vulgatus).